A 344-amino-acid polypeptide reads, in one-letter code: Nicotinate-nucleotide--dimethylbenzimidazole phosphoribosyltransferase (344 aa).

The active-site Proton acceptor is the E311.

This sequence belongs to the CobT family.

It catalyses the reaction 5,6-dimethylbenzimidazole + nicotinate beta-D-ribonucleotide = alpha-ribazole 5'-phosphate + nicotinate + H(+). Its pathway is nucleoside biosynthesis; alpha-ribazole biosynthesis; alpha-ribazole from 5,6-dimethylbenzimidazole: step 1/2. Its function is as follows. Catalyzes the synthesis of alpha-ribazole-5'-phosphate from nicotinate mononucleotide (NAMN) and 5,6-dimethylbenzimidazole (DMB). This is Nicotinate-nucleotide--dimethylbenzimidazole phosphoribosyltransferase from Aromatoleum aromaticum (strain DSM 19018 / LMG 30748 / EbN1) (Azoarcus sp. (strain EbN1)).